A 182-amino-acid polypeptide reads, in one-letter code: MQTEHVILLNAQGVPTGTLEKYAAHTADTLLHLAFSSWLFNAKGQLLVTRRALSKKAWPGVCTNSVCGHPQLGESNEDAVIRRCRYELGVEITPPESIYPDFRYRATDPSGIVENEVCPVFAARTTSALQINDDEVMDYQWCDLADVLHGIDATPWAFSPWMVMQAANSEARKLLSAFAQHN.

Mn(2+) is bound by residues His-25 and His-32. The 135-residue stretch at 30–164 (LLHLAFSSWL…PWAFSPWMVM (135 aa)) folds into the Nudix hydrolase domain. Residue Cys-67 is part of the active site. His-69 lines the Mn(2+) pocket. Residue Glu-87 participates in Mg(2+) binding. Mn(2+)-binding residues include Glu-114 and Glu-116. The active site involves Glu-116.

It belongs to the IPP isomerase type 1 family. In terms of assembly, homodimer. The cofactor is Mg(2+). Mn(2+) serves as cofactor.

It is found in the cytoplasm. The catalysed reaction is isopentenyl diphosphate = dimethylallyl diphosphate. It participates in isoprenoid biosynthesis; dimethylallyl diphosphate biosynthesis; dimethylallyl diphosphate from isopentenyl diphosphate: step 1/1. Functionally, catalyzes the 1,3-allylic rearrangement of the homoallylic substrate isopentenyl (IPP) to its highly electrophilic allylic isomer, dimethylallyl diphosphate (DMAPP). The sequence is that of Isopentenyl-diphosphate Delta-isomerase from Escherichia coli O9:H4 (strain HS).